The following is a 42-amino-acid chain: Large ribosomal subunit protein bL34c (42 aa).

This sequence belongs to the bacterial ribosomal protein bL34 family.

It localises to the plastid. It is found in the chloroplast. In Olisthodiscus luteus (Marine phytoflagellate), this protein is Large ribosomal subunit protein bL34c (rpl34).